The sequence spans 320 residues: MSNESSKKQSSKKALFDPVSFSKDLLAGGVAAAVSKTAVAPIERVKLLLQVQASSKQISPEARYKGMLDCLVRIPREQGFLSYWRGNLANVIRYFPTQALNFAFKDKYKELFMSGVNKEKQFWRWFLANLASGGAAGATSLCVVYPLDFARTRLGVDIGKGPEQRQFTGLGDCIMKIAKSDGLIGLYQGFGVSVQGIIVYRASYFGAYDTVKGLLPKPKETPFLVSFIIAQIVTTCSGILSYPFDTVRRRMMMQSGESDRQYKGTIDCFLKIYRHEGVPAFFRGAFSNILRGTGGALVLVLYDKIKEFLNIDVGGSSSGD.

Residues 1 to 20 (MSNESSKKQSSKKALFDPVS) are Mitochondrial intermembrane-facing. A Solcar 1 repeat occupies 19–111 (VSFSKDLLAG…FAFKDKYKEL (93 aa)). The helical transmembrane segment at 21–50 (FSKDLLAGGVAAAVSKTAVAPIERVKLLLQ) threads the bilayer. Residues 51–87 (VQASSKQISPEARYKGMLDCLVRIPREQGFLSYWRGN) are Mitochondrial matrix-facing. A helical transmembrane segment spans residues 88 to 112 (LANVIRYFPTQALNFAFKDKYKELF). ADP-binding residues include Arg-93 and Lys-105. Over 113 to 122 (MSGVNKEKQF) the chain is Mitochondrial intermembrane. A helical transmembrane segment spans residues 123 to 143 (WRWFLANLASGGAAGATSLCV). Solcar repeat units lie at residues 124-214 (RWFL…VKGL) and 221-308 (TPFL…IKEF). At 144–191 (VYPLDFARTRLGVDIGKGPEQRQFTGLGDCIMKIAKSDGLIGLYQGFG) the chain is on the mitochondrial matrix side. The helical transmembrane segment at 192–212 (VSVQGIIVYRASYFGAYDTVK) threads the bilayer. At 213–223 (GLLPKPKETPF) the chain is on the mitochondrial intermembrane side. The helical transmembrane segment at 224 to 244 (LVSFIIAQIVTTCSGILSYPF) threads the bilayer. Residues 245-284 (DTVRRRMMMQSGESDRQYKGTIDCFLKIYRHEGVPAFFRG) lie on the Mitochondrial matrix side of the membrane. Position 248 (Arg-248) interacts with ADP. The important for transport activity stretch occupies residues 248–253 (RRRMMM). Residues 248-253 (RRRMMM) carry the Nucleotide carrier signature motif motif. A helical membrane pass occupies residues 285 to 302 (AFSNILRGTGGALVLVLY). At 303–320 (DKIKEFLNIDVGGSSSGD) the chain is on the mitochondrial intermembrane side.

It belongs to the mitochondrial carrier (TC 2.A.29) family. As to quaternary structure, monomer. As to expression, specifically expressed in undifferentiated embryonic stem cells and germ cells. Expression is down-regulated after embryonic stem cells differentiation. In adults, only expressed in developing gametes in testis. In testis, expressed at higher level in spermatocytes. Expression is probably associated with entry of the male germ cells into meiosis. Expressed at very low level in Sertoli cells.

The protein localises to the mitochondrion inner membrane. It is found in the membrane. It localises to the cell projection. Its subcellular location is the cilium. The protein resides in the flagellum membrane. The enzyme catalyses ADP(in) + ATP(out) = ADP(out) + ATP(in). It carries out the reaction dATP(out) + ADP(in) = dATP(in) + ADP(out). The catalysed reaction is dADP(in) + ADP(out) = dADP(out) + ADP(in). It catalyses the reaction H(+)(in) = H(+)(out). The matrix-open state (m-state) is inhibited by the membrane-permeable bongkrekic acid (BKA). The cytoplasmic-open state (c-state) is inhibited by the membrane-impermeable toxic inhibitor carboxyatractyloside (CATR). Proton transporter activity is inhibited by ADP:ATP antiporter activity. Functionally, ADP:ATP antiporter that mediates import of ADP into the mitochondrial matrix for ATP synthesis, and export of ATP out to fuel the cell. Cycles between the cytoplasmic-open state (c-state) and the matrix-open state (m-state): operates by the alternating access mechanism with a single substrate-binding site intermittently exposed to either the cytosolic (c-state) or matrix (m-state) side of the inner mitochondrial membrane. Specifically required during spermatogenesis, probably to mediate ADP:ATP exchange in spermatocytes. Large ATP supplies from mitochondria may be critical for normal progression of spermatogenesis during early stages of meiotic prophase I, including DNA double-strand break repair and chromosomal synapsis. In addition to its ADP:ATP antiporter activity, also involved in mitochondrial uncoupling and mitochondrial permeability transition pore (mPTP) activity. Plays a role in mitochondrial uncoupling by acting as a proton transporter: proton transport uncouples the proton flows via the electron transport chain and ATP synthase to reduce the efficiency of ATP production and cause mitochondrial thermogenesis. Proton transporter activity is inhibited by ADP:ATP antiporter activity, suggesting that SLC25A31/ANT4 acts as a master regulator of mitochondrial energy output by maintaining a delicate balance between ATP production (ADP:ATP antiporter activity) and thermogenesis (proton transporter activity). Proton transporter activity requires free fatty acids as cofactor, but does not transport it. Among nucleotides, may also exchange ADP for dATP and dADP. Also plays a key role in mPTP opening, a non-specific pore that enables free passage of the mitochondrial membranes to solutes of up to 1.5 kDa, and which contributes to cell death. It is however unclear if SLC25A31/ANT4 constitutes a pore-forming component of mPTP or regulates it. The chain is ADP/ATP translocase 4 from Mus musculus (Mouse).